We begin with the raw amino-acid sequence, 689 residues long: Glycine--tRNA ligase beta subunit (689 aa).

Belongs to the class-II aminoacyl-tRNA synthetase family. In terms of assembly, tetramer of two alpha and two beta subunits.

It is found in the cytoplasm. It catalyses the reaction tRNA(Gly) + glycine + ATP = glycyl-tRNA(Gly) + AMP + diphosphate. This chain is Glycine--tRNA ligase beta subunit, found in Actinobacillus succinogenes (strain ATCC 55618 / DSM 22257 / CCUG 43843 / 130Z).